A 1403-amino-acid polypeptide reads, in one-letter code: Sushi, nidogen and EGF-like domain-containing protein 1 (1403 aa).

The signal sequence occupies residues 1-24; that stretch reads MRRGAAWALLLAAALGLGARGVRA. The region spanning 103–258 is the NIDO domain; that stretch reads AFWADVDNRR…GRWAFRIDDA (156 aa). EGF-like domains are found at residues 268 to 309, 311 to 347, and 349 to 385; these read TTSV…RRCH, DVNECASHPCQNGGTCTHGVNSFSCQCPAGFQGPTCE, and AQSPCDNKVCQNGGQCQAESSSAVCVCQAGYTGATCE. 18 cysteine pairs are disulfide-bonded: cysteine 272-cysteine 284, cysteine 278-cysteine 297, cysteine 299-cysteine 308, cysteine 315-cysteine 326, cysteine 320-cysteine 335, cysteine 337-cysteine 346, cysteine 353-cysteine 364, cysteine 358-cysteine 373, cysteine 375-cysteine 384, cysteine 391-cysteine 402, cysteine 396-cysteine 411, cysteine 413-cysteine 422, cysteine 433-cysteine 444, cysteine 438-cysteine 453, cysteine 455-cysteine 464, cysteine 472-cysteine 480, cysteine 474-cysteine 488, and cysteine 490-cysteine 499. N-linked (GlcNAc...) asparagine glycosylation is present at asparagine 292. In terms of domain architecture, EGF-like 4; calcium-binding spans 387–423; it reads DVDECSSDPCLNGGSCVDLVGNYSCICVEPFEGPQCE. Asparagine 408 is a glycosylation site (N-linked (GlcNAc...) asparagine). 2 consecutive EGF-like domains span residues 429 to 465 and 468 to 500; these read VPSPCLSNPCLNGGTCVDADQGYVCECPEGFMGLDCR and ILNDCDCRNGGRCLGANTTICQCPPGFFGLLCE. Residue asparagine 484 is glycosylated (N-linked (GlcNAc...) asparagine). Asparagine 536 is a glycosylation site (N-linked (GlcNAc...) asparagine). EGF-like domains are found at residues 541-577, 580-616, 619-655, and 657-693; these read LPSPCDSDPCFNGGSCDAHEDSYTCECPRGFHGRHCE, RPHLCSSGPCRNGGTCKETGDEYRCTCPYRFTGRHCE, KPDSCASGPCHNGGTCFHYIGKYKCDCPPGFSGRHCE, and APSPCFRSPCMNGGICEDLGTDFSCHCQPGYTGHRCQ. Intrachain disulfides connect cysteine 545–cysteine 556, cysteine 550–cysteine 565, cysteine 567–cysteine 576, cysteine 584–cysteine 595, cysteine 589–cysteine 604, cysteine 606–cysteine 615, cysteine 623–cysteine 634, cysteine 628–cysteine 643, cysteine 645–cysteine 654, cysteine 661–cysteine 672, cysteine 666–cysteine 681, cysteine 683–cysteine 692, cysteine 698–cysteine 739, cysteine 724–cysteine 751, cysteine 757–cysteine 768, cysteine 762–cysteine 777, cysteine 779–cysteine 788, cysteine 795–cysteine 806, cysteine 800–cysteine 815, cysteine 817–cysteine 826, cysteine 833–cysteine 844, cysteine 838–cysteine 853, cysteine 855–cysteine 864, cysteine 871–cysteine 882, cysteine 876–cysteine 891, and cysteine 893–cysteine 902. Residues 696–753 form the Sushi domain; that stretch reads VDCGQPEEVKHATMRLNGTRMGSVALYTCDPGFSLSVLSHMRVCQPQGVWSQPPQCIE. Asparagine 712 carries N-linked (GlcNAc...) asparagine glycosylation. The 37-residue stretch at 753–789 folds into the EGF-like 11; calcium-binding domain; the sequence is EVDECQSQPCLHKGSCQDLIAGYQCLCSPGYEGVHCE. The 37-residue stretch at 791 to 827 folds into the EGF-like 12; calcium-binding domain; the sequence is ETDECQAQPCRNGGSCRDLPGAFICQCPEGFVGTHCE. EGF-like domains follow at residues 829 to 865 and 867 to 903; these read EVDACASSPCQHGGRCEDGGGAYLCVCPEGFFGYNCE and VSDPCFSSPCGGRGYCLASNGSHSCTCKVGYTGKDCT. Residue asparagine 886 is glycosylated (N-linked (GlcNAc...) asparagine). Fibronectin type-III domains follow at residues 908-1006, 1007-1105, and 1106-1200; these read PPTA…TRPR, PIED…TRPL, and PPAN…SPRD. 5 N-linked (GlcNAc...) asparagine glycosylation sites follow: asparagine 977, asparagine 1015, asparagine 1109, asparagine 1139, and asparagine 1298. The interval 1295–1314 is disordered; sequence LPKNNSKDTESTPGSCSEDT. A compositionally biased stretch (polar residues) spans 1305–1314; sequence STPGSCSEDT. An EGF-like 15 domain is found at 1306–1342; that stretch reads TPGSCSEDTCQNGGTCVPGANAHSCDCRPGFKGRHCE. 3 disulfide bridges follow: cysteine 1310–cysteine 1321, cysteine 1315–cysteine 1330, and cysteine 1332–cysteine 1341.

Phosphorylated on serine and threonine residues. Post-translationally, N-glycosylated. Expressed in liver.

Its subcellular location is the secreted. It localises to the extracellular space. The protein localises to the extracellular matrix. This is Sushi, nidogen and EGF-like domain-containing protein 1 from Rattus norvegicus (Rat).